The chain runs to 678 residues: Chloride channel protein ClC-Kb (678 aa).

The Cytoplasmic segment spans residues 1–50; the sequence is MEELVGLREGSSGNPVALRELWSPCPRLRRGIRGGLEWLKQKLFRVGEDW. The next 2 helical transmembrane spans lie at 51–82 and 91–111; these read YFLMTLGVLMALISYAMNFALGRVVRAHKWLY and LRYLSWTVYPVALVSFSSGFS. Residues 116–127 constitute an intramembrane region (helical); the sequence is PFSGGSGIPELK. Chloride is bound at residue serine 121. 2 helical membrane passes run 141–160 and 161–180; these read IKNFGAKVVGLSCTLATGST and LFLGKVGPFVHLSVMIAAYL. An intramembrane region (helical) is located at residues 203–224; that stretch reads AGAAVGVATVFAAPFSGVLFCI. The chain crosses the membrane as a helical span at residues 236-255; it reads YWRGFFAATCGAFMFRLLAV. Residues glutamate 259, glutamate 261, aspartate 278, and glutamate 281 each contribute to the Ca(2+) site. 2 helical membrane-spanning segments follow: residues 282–310 and 325–342; these read IFFFVLLGAICGVASCAYLYCQRTFLAFT and PLYAALAATVLASITYPP. Residues 349 to 360 constitute an intramembrane region (helical); it reads ASRLSMREHLDT. Asparagine 364 carries an N-linked (GlcNAc...) asparagine glycan. A run of 2 helical transmembrane segments spans residues 400–420 and 421–440; these read GTLAFFLVMKFWMLILATTIP and MPAGYFLPIFIIGAAIGRLL. Position 426 (phenylalanine 426) interacts with chloride. The segment at residues 464-496 is an intramembrane region (helical); it reads GGYALAGAAAFSGAVTHSISTALLAFELTGQIV. Residues 500–520 traverse the membrane as a helical segment; it reads PVLMAVLAANAIAQSCQPSFY. The Cytoplasmic portion of the chain corresponds to 521-678; it reads DGTIMVKKLP…SWVERQHTGF (158 aa). CBS domains follow at residues 551-612 and 620-678; these read MRRA…ARAS and DILA…HTGF.

This sequence belongs to the chloride channel (TC 2.A.49) family. CLCNKB subfamily. Homodimer. Interacts with BSND. Post-translationally, N-glycosylated. Expressed predominantly in the kidney.

It localises to the basolateral cell membrane. It carries out the reaction chloride(in) = chloride(out). The catalysed reaction is iodide(out) = iodide(in). It catalyses the reaction nitrate(in) = nitrate(out). The enzyme catalyses bromide(in) = bromide(out). Functionally, anion-selective channel permeable to small monovalent anions with ion selectivity for chloride &gt; bromide &gt; nitrate &gt; iodide. Forms a homodimeric channel where each subunit has its own ion conduction pathway. May conduct double-barreled currents controlled by two types of gates, two fast gates that control each subunit independently and a slow common gate that opens and shuts off both subunits simultaneously. Assembles with the regulatory subunit BSND/Barttin for sorting at the basolateral plasma membrane domain and functional switch to the ion conducting state. CLCNKB:BSND channels display mostly a linear current-voltage relationship controlled by common gate. Mediates chloride conductance along nephron segments, namely the thick ascending limb of Henle's loop, convoluted tubule and the collecting duct, contributing to the maintenance of systemic acid-base and electrolyte homeostasis. Conducts chloride currents in the stria vascularis of the inner ear to establish the endocochlear potential necessary for normal hearing. In Oryctolagus cuniculus (Rabbit), this protein is Chloride channel protein ClC-Kb (CLCNKB).